The sequence spans 361 residues: MLYFLAEHLAKLEFLKSIYLRAFLGFVISFCIVLFAGRPFIKYLKIKKFGEEIRDDGPSSHFSKKGTPTMGGVLIIAAVLLTSIFINDLTNSLILLVLLSTIMFAAIGFIDDYRKFTVSKKGLAGKKKLLFQGAIGLIIWAYIYFIGLTGRPMVDLSLINPISAYPYYIGAIGLFFLIQIVLMGTSNAVNITDGLDGLAIMPMIICSTILGVIAYFTGHTELSSHLHLFYTVGSGELSVFLSAVTGAGLGFLWYNCYPAQIFMGDTGSLTLGGILGVIAIILKQELMLPIMGFIFVLEALSVILQVGSFKLRGKRIFKMAPIHHHFELMGIPESKVTMRFWIGTLIFGIIALGAIKMRGIL.

Helical transmembrane passes span 17-37 (SIYL…LFAG), 66-86 (GTPT…SIFI), 90-110 (TNSL…IGFI), 129-149 (LLFQ…IGLT), 162-182 (ISAY…QIVL), 197-217 (GLAI…AYFT), 232-252 (VGSG…LGFL), 261-281 (IFMG…IAII), 286-306 (LMLP…ILQV), and 340-360 (FWIG…MRGI).

Belongs to the glycosyltransferase 4 family. MraY subfamily. Mg(2+) serves as cofactor.

It localises to the cell inner membrane. The enzyme catalyses UDP-N-acetyl-alpha-D-muramoyl-L-alanyl-gamma-D-glutamyl-meso-2,6-diaminopimeloyl-D-alanyl-D-alanine + di-trans,octa-cis-undecaprenyl phosphate = di-trans,octa-cis-undecaprenyl diphospho-N-acetyl-alpha-D-muramoyl-L-alanyl-D-glutamyl-meso-2,6-diaminopimeloyl-D-alanyl-D-alanine + UMP. It functions in the pathway cell wall biogenesis; peptidoglycan biosynthesis. Catalyzes the initial step of the lipid cycle reactions in the biosynthesis of the cell wall peptidoglycan: transfers peptidoglycan precursor phospho-MurNAc-pentapeptide from UDP-MurNAc-pentapeptide onto the lipid carrier undecaprenyl phosphate, yielding undecaprenyl-pyrophosphoryl-MurNAc-pentapeptide, known as lipid I. The chain is Phospho-N-acetylmuramoyl-pentapeptide-transferase from Fusobacterium nucleatum subsp. nucleatum (strain ATCC 25586 / DSM 15643 / BCRC 10681 / CIP 101130 / JCM 8532 / KCTC 2640 / LMG 13131 / VPI 4355).